The sequence spans 211 residues: Imidazole glycerol phosphate synthase subunit HisH (211 aa).

The Glutamine amidotransferase type-1 domain maps to 3 to 211; sequence VIAVIDYDMG…VNQIRVKAIA (209 aa). The active-site Nucleophile is the Cys-81. Active-site residues include His-186 and Glu-188.

As to quaternary structure, heterodimer of HisH and HisF.

The protein resides in the cytoplasm. The catalysed reaction is 5-[(5-phospho-1-deoxy-D-ribulos-1-ylimino)methylamino]-1-(5-phospho-beta-D-ribosyl)imidazole-4-carboxamide + L-glutamine = D-erythro-1-(imidazol-4-yl)glycerol 3-phosphate + 5-amino-1-(5-phospho-beta-D-ribosyl)imidazole-4-carboxamide + L-glutamate + H(+). It carries out the reaction L-glutamine + H2O = L-glutamate + NH4(+). It functions in the pathway amino-acid biosynthesis; L-histidine biosynthesis; L-histidine from 5-phospho-alpha-D-ribose 1-diphosphate: step 5/9. Its function is as follows. IGPS catalyzes the conversion of PRFAR and glutamine to IGP, AICAR and glutamate. The HisH subunit catalyzes the hydrolysis of glutamine to glutamate and ammonia as part of the synthesis of IGP and AICAR. The resulting ammonia molecule is channeled to the active site of HisF. The polypeptide is Imidazole glycerol phosphate synthase subunit HisH (Gloeothece citriformis (strain PCC 7424) (Cyanothece sp. (strain PCC 7424))).